The chain runs to 285 residues: Shikimate dehydrogenase (NADP(+)) (285 aa).

Shikimate-binding positions include 19–21 (SLS) and Thr66. Residue Lys70 is the Proton acceptor of the active site. The shikimate site is built by Asn91 and Asp107. Residues 129–133 (GSGGA) and Leu228 each bind NADP(+). Tyr230 provides a ligand contact to shikimate. Residue Gly251 coordinates NADP(+).

Belongs to the shikimate dehydrogenase family. In terms of assembly, homodimer.

The catalysed reaction is shikimate + NADP(+) = 3-dehydroshikimate + NADPH + H(+). The protein operates within metabolic intermediate biosynthesis; chorismate biosynthesis; chorismate from D-erythrose 4-phosphate and phosphoenolpyruvate: step 4/7. Functionally, involved in the biosynthesis of the chorismate, which leads to the biosynthesis of aromatic amino acids. Catalyzes the reversible NADPH linked reduction of 3-dehydroshikimate (DHSA) to yield shikimate (SA). This chain is Shikimate dehydrogenase (NADP(+)), found in Prochlorococcus marinus subsp. pastoris (strain CCMP1986 / NIES-2087 / MED4).